Here is a 228-residue protein sequence, read N- to C-terminus: uncharacterized protein (228 aa).

Transmembrane regions (helical) follow at residues 14–34, 53–73, 108–128, 148–168, 178–198, and 200–220; these read GWYI…MWLI, FLII…VLIV, GLTF…FFWL, AVKM…PIFF, TIIS…GFSI, and SVVY…YMAI.

The protein localises to the cell membrane. This is an uncharacterized protein from Bacillus subtilis (strain 168).